Here is a 134-residue protein sequence, read N- to C-terminus: MAKSTIQESVATGRRKQAVSSVRLRPGSGKIDVNGKSFEDYFPLEIQRTTILSPLKKITEDQSQYDLIIRVSGGGIQGQVIATRLGLARALLKENEENRQDLKSCGFLTRDPRKKERKKYGHKKARKSFQFSKR.

Residues 97–134 (ENRQDLKSCGFLTRDPRKKERKKYGHKKARKSFQFSKR) are disordered. Residues 115-134 (KERKKYGHKKARKSFQFSKR) show a composition bias toward basic residues.

It belongs to the universal ribosomal protein uS9 family.

The sequence is that of Small ribosomal subunit protein uS9 (rpsI) from Chlamydia pneumoniae (Chlamydophila pneumoniae).